Consider the following 128-residue polypeptide: Sulfurtransferase TusD (128 aa).

Cysteine 78 functions as the Cysteine persulfide intermediate in the catalytic mechanism.

This sequence belongs to the DsrE/TusD family. In terms of assembly, heterohexamer, formed by a dimer of trimers. The hexameric TusBCD complex contains 2 copies each of TusB, TusC and TusD. The TusBCD complex interacts with TusE.

The protein resides in the cytoplasm. Part of a sulfur-relay system required for 2-thiolation of 5-methylaminomethyl-2-thiouridine (mnm(5)s(2)U) at tRNA wobble positions. Accepts sulfur from TusA and transfers it in turn to TusE. The protein is Sulfurtransferase TusD of Salmonella typhi.